A 439-amino-acid chain; its full sequence is Adenylosuccinate synthetase (439 aa).

Residues 14 to 20 and 42 to 44 each bind GTP; these read GDEGKGK and GHT. The active-site Proton acceptor is the Asp-15. Asp-15 and Gly-42 together coordinate Mg(2+). Residues 15 to 18, 40 to 43, Thr-130, Arg-144, Gln-225, Thr-240, and Arg-304 each bind IMP; these read DEGK and NAGH. Catalysis depends on His-43, which acts as the Proton donor. 300 to 306 serves as a coordination point for substrate; sequence TTTGRRR. Residues Arg-306, 332-334, and 414-416 contribute to the GTP site; these read KLD and SLG.

The protein belongs to the adenylosuccinate synthetase family. As to quaternary structure, homodimer. Mg(2+) is required as a cofactor.

It localises to the cytoplasm. The enzyme catalyses IMP + L-aspartate + GTP = N(6)-(1,2-dicarboxyethyl)-AMP + GDP + phosphate + 2 H(+). Its pathway is purine metabolism; AMP biosynthesis via de novo pathway; AMP from IMP: step 1/2. Plays an important role in the de novo pathway of purine nucleotide biosynthesis. Catalyzes the first committed step in the biosynthesis of AMP from IMP. In Synechococcus sp. (strain CC9902), this protein is Adenylosuccinate synthetase.